A 378-amino-acid polypeptide reads, in one-letter code: Decaprenyl-diphosphate synthase subunit 1 (378 aa).

Lys-72, Arg-75, and His-130 together coordinate isopentenyl diphosphate. Positions 137 and 141 each coordinate Mg(2+). An isopentenyl diphosphate-binding site is contributed by Arg-147.

Belongs to the FPP/GGPP synthase family. Heterotetramer of 2 dps1 and 2 dlp1 subunits. Mg(2+) serves as cofactor.

It is found in the mitochondrion. It catalyses the reaction 7 isopentenyl diphosphate + (2E,6E)-farnesyl diphosphate = all-trans-decaprenyl diphosphate + 7 diphosphate. Its pathway is cofactor biosynthesis; ubiquinone biosynthesis. In terms of biological role, supplies decaprenyl diphosphate, the precursor for the side chain of the isoprenoid quinones ubiquinone-10. This is Decaprenyl-diphosphate synthase subunit 1 (dps1) from Schizosaccharomyces pombe (strain 972 / ATCC 24843) (Fission yeast).